A 267-amino-acid polypeptide reads, in one-letter code: Undecaprenyl-diphosphatase (267 aa).

The next 8 membrane-spanning stretches (helical) occupy residues 1-21, 39-59, 83-103, 111-131, 144-164, 189-209, 218-238, and 246-266; these read MSYF…FLPI, QGLA…VIYF, AKLA…GLLM, LRSA…LWWV, AGWK…IPGT, FLMS…KLVT, TLLT…HFFL, and MTPF…FLMM.

It belongs to the UppP family.

The protein resides in the cell inner membrane. The catalysed reaction is di-trans,octa-cis-undecaprenyl diphosphate + H2O = di-trans,octa-cis-undecaprenyl phosphate + phosphate + H(+). Its function is as follows. Catalyzes the dephosphorylation of undecaprenyl diphosphate (UPP). Confers resistance to bacitracin. The sequence is that of Undecaprenyl-diphosphatase from Vibrio atlanticus (strain LGP32) (Vibrio splendidus (strain Mel32)).